A 393-amino-acid chain; its full sequence is Elongation factor Tu (393 aa).

The 194-residue stretch at 10-203 folds into the tr-type G domain; the sequence is KPHVNIGTIG…AVDDYIPEPV (194 aa). The segment at 19–26 is G1; it reads GHVDHGKT. 19–26 provides a ligand contact to GTP; the sequence is GHVDHGKT. Thr-26 is a Mg(2+) binding site. Positions 60 to 64 are G2; that stretch reads GITIS. A G3 region spans residues 81-84; that stretch reads DCPG. GTP-binding positions include 81–85 and 136–139; these read DCPGH and NKVD. The G4 stretch occupies residues 136–139; it reads NKVD. Residues 173 to 175 form a G5 region; it reads SAL.

This sequence belongs to the TRAFAC class translation factor GTPase superfamily. Classic translation factor GTPase family. EF-Tu/EF-1A subfamily. Monomer.

It localises to the cytoplasm. It catalyses the reaction GTP + H2O = GDP + phosphate + H(+). In terms of biological role, GTP hydrolase that promotes the GTP-dependent binding of aminoacyl-tRNA to the A-site of ribosomes during protein biosynthesis. The protein is Elongation factor Tu of Chlorobaculum parvum (strain DSM 263 / NCIMB 8327) (Chlorobium vibrioforme subsp. thiosulfatophilum).